The primary structure comprises 140 residues: Inner membrane protein YphA (140 aa).

Over 1-13 the chain is Cytoplasmic; that stretch reads MNTLRYFDFGAAR. The chain crosses the membrane as a helical span at residues 14–34; it reads PVLLLIARIAVVLIFIIFGFP. Over 35-56 the chain is Periplasmic; that stretch reads KMMGFDGTVQYMASLGAPMPML. The chain crosses the membrane as a helical span at residues 57 to 77; the sequence is AAIIAVVMEVPAAILIVLGFF. Residues 78–79 lie on the Cytoplasmic side of the membrane; it reads TR. The helical transmembrane segment at 80–100 threads the bilayer; sequence PLAVLFIFYTLGTAVIGHHYW. The Periplasmic segment spans residues 101-116; the sequence is DMTGDAVGPNMINFWK. A helical membrane pass occupies residues 117–137; sequence NVSIAGAFLLLAITGPGAISL. Topologically, residues 138–140 are cytoplasmic; the sequence is DRR.

This sequence belongs to the DoxX family.

The protein resides in the cell inner membrane. In Escherichia coli (strain K12), this protein is Inner membrane protein YphA (yphA).